The chain runs to 352 residues: S-adenosylmethionine:tRNA ribosyltransferase-isomerase (352 aa).

It belongs to the QueA family. In terms of assembly, monomer.

It is found in the cytoplasm. It carries out the reaction 7-aminomethyl-7-carbaguanosine(34) in tRNA + S-adenosyl-L-methionine = epoxyqueuosine(34) in tRNA + adenine + L-methionine + 2 H(+). It functions in the pathway tRNA modification; tRNA-queuosine biosynthesis. Transfers and isomerizes the ribose moiety from AdoMet to the 7-aminomethyl group of 7-deazaguanine (preQ1-tRNA) to give epoxyqueuosine (oQ-tRNA). This chain is S-adenosylmethionine:tRNA ribosyltransferase-isomerase, found in Syntrophomonas wolfei subsp. wolfei (strain DSM 2245B / Goettingen).